The following is a 49-amino-acid chain: SPbeta prophage-derived uncharacterized protein YoqT (49 aa).

Residues 7-29 traverse the membrane as a helical segment; sequence CFVNWSFDKIMDYILIAGLYFVF.

It is found in the cell membrane. This Bacillus subtilis (strain 168) protein is SPbeta prophage-derived uncharacterized protein YoqT (yoqT).